The following is a 669-amino-acid chain: Probable potassium transport system protein Kup (669 aa).

12 consecutive transmembrane segments (helical) span residues 47-67, 86-106, 144-164, 172-192, 206-226, 252-272, 288-308, 326-346, 378-398, 404-424, 435-455, and 460-480; these read VLML…TSPL, VIGI…IKYM, TIIG…TPAI, GLTL…IFVM, IGVI…LLGI, GMAG…GEAL, WFFV…ALLL, ALLP…QALI, IYIP…VLTF, LAAA…ILAF, LLKS…FFGA, and IPHG…LMTT.

This sequence belongs to the HAK/KUP transporter (TC 2.A.72) family.

Its subcellular location is the cell inner membrane. The catalysed reaction is K(+)(in) + H(+)(in) = K(+)(out) + H(+)(out). Its function is as follows. Transport of potassium into the cell. Likely operates as a K(+):H(+) symporter. The polypeptide is Probable potassium transport system protein Kup (Bdellovibrio bacteriovorus (strain ATCC 15356 / DSM 50701 / NCIMB 9529 / HD100)).